Reading from the N-terminus, the 417-residue chain is Serine hydroxymethyltransferase (417 aa).

(6S)-5,6,7,8-tetrahydrofolate is bound by residues Leu121 and 125–127 (GHL). At Lys229 the chain carries N6-(pyridoxal phosphate)lysine. 354–356 (SPF) provides a ligand contact to (6S)-5,6,7,8-tetrahydrofolate.

It belongs to the SHMT family. As to quaternary structure, homodimer. Pyridoxal 5'-phosphate is required as a cofactor.

Its subcellular location is the cytoplasm. It carries out the reaction (6R)-5,10-methylene-5,6,7,8-tetrahydrofolate + glycine + H2O = (6S)-5,6,7,8-tetrahydrofolate + L-serine. Its pathway is one-carbon metabolism; tetrahydrofolate interconversion. It functions in the pathway amino-acid biosynthesis; glycine biosynthesis; glycine from L-serine: step 1/1. Its function is as follows. Catalyzes the reversible interconversion of serine and glycine with tetrahydrofolate (THF) serving as the one-carbon carrier. This reaction serves as the major source of one-carbon groups required for the biosynthesis of purines, thymidylate, methionine, and other important biomolecules. Also exhibits THF-independent aldolase activity toward beta-hydroxyamino acids, producing glycine and aldehydes, via a retro-aldol mechanism. The chain is Serine hydroxymethyltransferase from Azotobacter vinelandii (strain DJ / ATCC BAA-1303).